The chain runs to 566 residues: FAD-dependent monooxygenase asqG (566 aa).

The signal sequence occupies residues 1–19; the sequence is MAAFTVIIIGGSISGLTLA. FAD is bound by residues Glu33, Val47, Arg113, Asp313, and Ala326. 2 helical membrane-spanning segments follow: residues 448–468 and 482–502; these read ASST…GAVW and GYTL…ASAV.

It belongs to the paxM FAD-dependent monooxygenase family. Requires FAD as cofactor.

The protein localises to the membrane. The catalysed reaction is [(1'E)-3'-hydroxy-3',7'-dimethylocta-1',6'-dien-1'-yl]-quinolinone B + NADPH + O2 + H(+) = [(1'E)-5'-(3',3'-dimethyloxiran-2'-yl)-3'-hydroxy-3'-methylpent-1'-en-1'-yl]-quinolinone B + NADP(+) + H2O. The protein operates within secondary metabolite biosynthesis. Its pathway is alkaloid biosynthesis. It participates in mycotoxin biosynthesis. Functionally, FAD-dependent monooxygenase; part of the gene cluster that mediates the biosynthesis of the aspoquinolone mycotoxins. Within the pathway, the FAD-dependent monooxygenase asqG catalyzes the epoxidation of the terminal C7'-C8' olefin to produce the intermediate [(1'E)-5'-(3',3'-dimethyloxiran-2'-yl)-3'-hydroxy-3'-methylpent-1'-en-1'-yl]-quinolinone B. The first step of the pathway is catalyzed by the nonribosomal peptide synthetase asqK that condenses anthranilic acid and O-methyl-L-tyrosine to produce 4'-methoxycyclopeptin. 4'-methoxycyclopeptin is then converted to 4'-methoxydehydrocyclopeptin by the ketoglutarate-dependent dioxygenase asqJ. AsqJ also converts its first product 4'-methoxydehydrocyclopeptin to 4'-methoxycyclopenin. The following conversion of 4'-methoxycyclopenin into 4'-methoxyviridicatin is catalyzed by the cyclopenase asqI. 4'-methoxyviridicatin is the precursor of quinolone natural products, and is further converted to quinolinone B. The prenyltransferase asqH1 then catalyzes the canonical Friedel-Crafts alkylation of quinolinone B with dimethylallyl cation to yield dimethylallyl quinolone, which is subjected to FAD-dependent dehydrogenation by the FAD-linked oxidoreductase asqF to yield conjugated aryl diene. The delta(3') double bond then serves as the site of the second alkylation with DMAPP catalyzed by the prenyltransferase asqH2 to yield a carbenium ion intermediate, which can be attacked by H(2)O to yield a styrenyl quinolone containing a C3'-hydroxyprenyl chain. The FAD-dependent monooxygenase asqG performs epoxidation of the terminal C7'-C8' olefin. Finally, after dehydratation of the epoxide at C3 by asqC, the quinolone epoxide rearrangement protein asqO catalyzes an enzymatic 3-exo-tet cyclization to yield the cyclopropyl-THF ring system in aspoquinolone. In Emericella nidulans (strain FGSC A4 / ATCC 38163 / CBS 112.46 / NRRL 194 / M139) (Aspergillus nidulans), this protein is FAD-dependent monooxygenase asqG.